We begin with the raw amino-acid sequence, 230 residues long: TorCAD operon transcriptional regulatory protein TorR (230 aa).

Residues 4–117 (HIVIVEDEPV…ELVVRVKNLL (114 aa)) form the Response regulatory domain. A 4-aspartylphosphate modification is found at Asp53. Residues 132–227 (DNCYRFAGYC…QHGEGYFLAA (96 aa)) constitute a DNA-binding region (ompR/PhoB-type).

In terms of processing, phosphorylated and dephosphorylated by TorS.

The protein localises to the cytoplasm. Member of the two-component regulatory system TorS/TorR involved in the anaerobic utilization of trimethylamine-N-oxide (TMAO). Phosphorylated TorR activates the transcription of the torCAD operon by binding to four decameric boxes located in the torCAD promoter. Box1, 2 and 4 contain the DNA sequence 5'-CTGTTCATAT-3' and box3 contains the DNA sequence 5'-CCGTTCATCC-3'. Phosphorylated as well as unphosphorylated TorR negatively regulates its own expression by binding to box1 and 2. In Escherichia coli O157:H7, this protein is TorCAD operon transcriptional regulatory protein TorR (torR).